A 258-amino-acid chain; its full sequence is Type III pantothenate kinase (258 aa).

ATP is bound at residue 6–13; the sequence is DAGNTRIK. Substrate is bound by residues tyrosine 98 and 105-108; that span reads GSDR. Catalysis depends on aspartate 107, which acts as the Proton acceptor. Threonine 131 is an ATP binding site. Threonine 184 is a binding site for substrate.

This sequence belongs to the type III pantothenate kinase family. In terms of assembly, homodimer. NH4(+) serves as cofactor. It depends on K(+) as a cofactor.

Its subcellular location is the cytoplasm. It carries out the reaction (R)-pantothenate + ATP = (R)-4'-phosphopantothenate + ADP + H(+). The protein operates within cofactor biosynthesis; coenzyme A biosynthesis; CoA from (R)-pantothenate: step 1/5. Functionally, catalyzes the phosphorylation of pantothenate (Pan), the first step in CoA biosynthesis. The chain is Type III pantothenate kinase from Herminiimonas arsenicoxydans.